We begin with the raw amino-acid sequence, 352 residues long: Biotin synthase (352 aa).

Residues 44 to 262 enclose the Radical SAM core domain; the sequence is NRVQVSTLLS…LAVARILMPK (219 aa). 3 residues coordinate [4Fe-4S] cluster: Cys-59, Cys-63, and Cys-66. Cys-103, Cys-134, Cys-194, and Arg-266 together coordinate [2Fe-2S] cluster.

The protein belongs to the radical SAM superfamily. Biotin synthase family. As to quaternary structure, homodimer. Requires [4Fe-4S] cluster as cofactor. The cofactor is [2Fe-2S] cluster.

The catalysed reaction is (4R,5S)-dethiobiotin + (sulfur carrier)-SH + 2 reduced [2Fe-2S]-[ferredoxin] + 2 S-adenosyl-L-methionine = (sulfur carrier)-H + biotin + 2 5'-deoxyadenosine + 2 L-methionine + 2 oxidized [2Fe-2S]-[ferredoxin]. It functions in the pathway cofactor biosynthesis; biotin biosynthesis; biotin from 7,8-diaminononanoate: step 2/2. Functionally, catalyzes the conversion of dethiobiotin (DTB) to biotin by the insertion of a sulfur atom into dethiobiotin via a radical-based mechanism. The polypeptide is Biotin synthase (Pseudomonas putida (strain ATCC 47054 / DSM 6125 / CFBP 8728 / NCIMB 11950 / KT2440)).